A 437-amino-acid chain; its full sequence is UDP-N-acetylmuramate--L-alanine ligase (437 aa).

108 to 114 contributes to the ATP binding site; the sequence is GAHGKTS.

This sequence belongs to the MurCDEF family.

The protein localises to the cytoplasm. The catalysed reaction is UDP-N-acetyl-alpha-D-muramate + L-alanine + ATP = UDP-N-acetyl-alpha-D-muramoyl-L-alanine + ADP + phosphate + H(+). Its pathway is cell wall biogenesis; peptidoglycan biosynthesis. Cell wall formation. This Staphylococcus aureus (strain JH9) protein is UDP-N-acetylmuramate--L-alanine ligase.